Consider the following 230-residue polypeptide: Sugar fermentation stimulation protein homolog (230 aa).

This sequence belongs to the SfsA family.

The sequence is that of Sugar fermentation stimulation protein homolog from Thermoanaerobacter pseudethanolicus (strain ATCC 33223 / 39E) (Clostridium thermohydrosulfuricum).